Consider the following 587-residue polypeptide: Formate--tetrahydrofolate ligase (587 aa).

An ATP-binding site is contributed by Thr-73–Ser-80.

Belongs to the formate--tetrahydrofolate ligase family.

It carries out the reaction (6S)-5,6,7,8-tetrahydrofolate + formate + ATP = (6R)-10-formyltetrahydrofolate + ADP + phosphate. Its pathway is one-carbon metabolism; tetrahydrofolate interconversion. This is Formate--tetrahydrofolate ligase from Desulfosudis oleivorans (strain DSM 6200 / JCM 39069 / Hxd3) (Desulfococcus oleovorans).